Here is a 124-residue protein sequence, read N- to C-terminus: Small ribosomal subunit protein uS13 (124 aa).

Residues 94–124 (GLPLRGQRTKNNSRTRKGKRKTVANKKKATK) form a disordered region. The span at 100–124 (QRTKNNSRTRKGKRKTVANKKKATK) shows a compositional bias: basic residues.

It belongs to the universal ribosomal protein uS13 family. As to quaternary structure, part of the 30S ribosomal subunit. Forms a loose heterodimer with protein S19. Forms two bridges to the 50S subunit in the 70S ribosome.

Its function is as follows. Located at the top of the head of the 30S subunit, it contacts several helices of the 16S rRNA. In the 70S ribosome it contacts the 23S rRNA (bridge B1a) and protein L5 of the 50S subunit (bridge B1b), connecting the 2 subunits; these bridges are implicated in subunit movement. Contacts the tRNAs in the A and P-sites. The protein is Small ribosomal subunit protein uS13 of Flavobacterium johnsoniae (strain ATCC 17061 / DSM 2064 / JCM 8514 / BCRC 14874 / CCUG 350202 / NBRC 14942 / NCIMB 11054 / UW101) (Cytophaga johnsonae).